A 524-amino-acid polypeptide reads, in one-letter code: RNA-splicing ligase RtcB homolog 1 (524 aa).

Residues Asp-141, Cys-144, His-249, His-281, and His-372 each contribute to the Mn(2+) site. 248–252 serves as a coordination point for GMP; the sequence is NHYLE. GMP is bound by residues 372–373, 421–424, Ser-428, 447–450, and Lys-523; these read HN, GGSM, and HGAG. His-447 (GMP-histidine intermediate) is an active-site residue.

The protein belongs to the RtcB family. In terms of assembly, catalytic component of the tRNA-splicing ligase complex. It depends on Mn(2+) as a cofactor.

It carries out the reaction a 3'-end 3'-phospho-ribonucleotide-RNA + a 5'-end dephospho-ribonucleoside-RNA + GTP = a ribonucleotidyl-ribonucleotide-RNA + GMP + diphosphate. The enzyme catalyses a 3'-end 2',3'-cyclophospho-ribonucleotide-RNA + a 5'-end dephospho-ribonucleoside-RNA + GTP + H2O = a ribonucleotidyl-ribonucleotide-RNA + GMP + diphosphate + H(+). Functionally, catalytic subunit of the tRNA-splicing ligase complex that acts by directly joining spliced tRNA halves to mature-sized tRNAs by incorporating the precursor-derived splice junction phosphate into the mature tRNA as a canonical 3',5'-phosphodiester. May act as an RNA ligase with broad substrate specificity, and may function toward other RNAs. The polypeptide is RNA-splicing ligase RtcB homolog 1 (Entamoeba histolytica (strain ATCC 30459 / HM-1:IMSS / ABRM)).